The chain runs to 271 residues: uncharacterized protein (271 aa).

2 disordered regions span residues 50 to 93 (KKKT…SSSL) and 128 to 233 (KNNY…RKKV). Low complexity-rich tracts occupy residues 61–93 (SPTK…SSSL) and 129–165 (NNYN…NNNN). The segment covering 169–179 (TDKKEGEKNEN) has biased composition (basic and acidic residues). Acidic residues-rich tracts occupy residues 180–199 (ENEN…DIIE) and 207–217 (MDEELENEQVE).

This is an uncharacterized protein from Dictyostelium discoideum (Social amoeba).